Here is a 383-residue protein sequence, read N- to C-terminus: WAT1-related protein At3g18200 (383 aa).

The span at 1–16 shows a compositional bias: basic residues; sequence MCYQTSKKKRRSRKRR. The interval 1–23 is disordered; sequence MCYQTSKKKRRSRKRRAQEEKEK. Transmembrane regions (helical) follow at residues 33-53, 65-85, 91-111, 126-146, 158-178, 204-224, 237-257, 272-292, 300-320, and 325-345; these read VKLV…HIVS, VYPV…AYFF, PPLT…GITA, TFAS…ACAL, GVAK…ITLY, LTLG…WMVL, TLTS…ALFV, LFTI…LQTW, VFVA…AFLI, and LYSG…LVLW. 2 EamA domains span residues 44-173 and 216-344; these read FCFA…GGAT and LSWA…YLVL.

This sequence belongs to the drug/metabolite transporter (DMT) superfamily. Plant drug/metabolite exporter (P-DME) (TC 2.A.7.4) family.

It localises to the membrane. This is WAT1-related protein At3g18200 from Arabidopsis thaliana (Mouse-ear cress).